The following is a 353-amino-acid chain: uncharacterized protein (353 aa).

A signal peptide spans 1-24; that stretch reads MRVVKRIAVACYLGITIFSGIAFG.

This sequence belongs to the chlamydial CPn_1058/CT_355/TC_0634 family.

This is an uncharacterized protein from Chlamydia muridarum (strain MoPn / Nigg).